A 228-amino-acid chain; its full sequence is Lipoprotein-releasing system ATP-binding protein LolD (228 aa).

Residues 6–228 (LRLSGIEKTY…LSDGRLSAES (223 aa)) form the ABC transporter domain. 43–50 (APSGAGKS) provides a ligand contact to ATP.

The protein belongs to the ABC transporter superfamily. Lipoprotein translocase (TC 3.A.1.125) family. In terms of assembly, the complex is composed of two ATP-binding proteins (LolD) and two transmembrane proteins (LolC and LolE).

Its subcellular location is the cell inner membrane. Part of the ABC transporter complex LolCDE involved in the translocation of mature outer membrane-directed lipoproteins, from the inner membrane to the periplasmic chaperone, LolA. Responsible for the formation of the LolA-lipoprotein complex in an ATP-dependent manner. The chain is Lipoprotein-releasing system ATP-binding protein LolD from Ruegeria pomeroyi (strain ATCC 700808 / DSM 15171 / DSS-3) (Silicibacter pomeroyi).